The following is a 1586-amino-acid chain: COP1-interactive protein 1 (1586 aa).

In terms of domain architecture, NAB spans Leu10 to Ile84. The segment at Val88–Lys119 is disordered. Coiled coils occupy residues Thr128–Ser411, Ala437–Glu1196, Leu1225–Thr1336, and Met1372–Lys1406. LRR repeat units follow at residues Ser173–Leu187, Glu188–Lys210, Asn216–Arg239, Thr261–Ala285, and Glu287–Thr309. Residues Asp249–Ser262 show a composition bias toward basic and acidic residues. The segment at Asp249–Glu286 is disordered. The segment at Lys325–Glu353 is disordered. LRR repeat units follow at residues Ile384–Glu410, Ala437–Ala461, Val473–Asp498, Ile560–Glu586, Val613–Ala637, Leu649–Asp674, Leu768–Ala792, Leu824–Arg850, Val856–Ser880, Glu902–Leu929, Leu944–Ala968, Gln990–Leu1014, Ile1077–Asn1101, Arg1120–Ala1144, Glu1195–Gly1220, Val1247–Asn1272, Met1372–Ile1396, Val1398–Lys1417, Ala1426–Gly1448, and Ile1450–Lys1474. The segment at Gln430–Ala456 is disordered. Positions Leu444–Ser455 are enriched in polar residues. Residues Leu965 to Glu985 are disordered. Residues Val1496–Glu1530 are a coiled coil.

In terms of assembly, interacts with COP1 coiled-coil region. As to expression, mainly expressed in photosynthetic and vascular tissues. Accumulates in both dark-grown and light-grown seedlings roots and shoots, leaves and flowers (at protein level).

The protein localises to the cell membrane. Its subcellular location is the cytoplasm. It localises to the cytoskeleton. Functionally, positive regulator of abscisic acid (ABA)-mediated signaling pathways involved in abiotic stress responses (e.g. osmotic stress) and leading to various plant adaptation (e.g. stomata closure). The chain is COP1-interactive protein 1 from Arabidopsis thaliana (Mouse-ear cress).